Here is a 339-residue protein sequence, read N- to C-terminus: Serine/threonine-protein kinase pdik1l-B (339 aa).

Residues 8–332 (YDLIREVGRG…LELKLIQIAF (325 aa)) enclose the Protein kinase domain. Residues 14–22 (VGRGSYGLV) and Lys37 each bind ATP. Asp164 (proton acceptor) is an active-site residue.

It belongs to the protein kinase superfamily. Ser/Thr protein kinase family.

Its subcellular location is the nucleus. It catalyses the reaction L-seryl-[protein] + ATP = O-phospho-L-seryl-[protein] + ADP + H(+). The catalysed reaction is L-threonyl-[protein] + ATP = O-phospho-L-threonyl-[protein] + ADP + H(+). The polypeptide is Serine/threonine-protein kinase pdik1l-B (pdik1-b) (Xenopus laevis (African clawed frog)).